Reading from the N-terminus, the 694-residue chain is Polyphosphate kinase (694 aa).

N45 lines the ATP pocket. Mg(2+)-binding residues include R367 and R397. The active-site Phosphohistidine intermediate is the H427. 3 residues coordinate ATP: Y460, R553, and H580.

The protein belongs to the polyphosphate kinase 1 (PPK1) family. Requires Mg(2+) as cofactor. An intermediate of this reaction is the autophosphorylated ppk in which a phosphate is covalently linked to a histidine residue through a N-P bond.

It carries out the reaction [phosphate](n) + ATP = [phosphate](n+1) + ADP. Functionally, catalyzes the reversible transfer of the terminal phosphate of ATP to form a long-chain polyphosphate (polyP). This chain is Polyphosphate kinase, found in Campylobacter jejuni subsp. doylei (strain ATCC BAA-1458 / RM4099 / 269.97).